Consider the following 163-residue polypeptide: Thiol peroxidase (163 aa).

Residues 16-162 (LQVGDTAHDF…YDAAIAAVKS (147 aa)) form the Thioredoxin domain. Cys58 acts as the Cysteine sulfenic acid (-SOH) intermediate in catalysis. An intrachain disulfide couples Cys58 to Cys92.

Belongs to the peroxiredoxin family. Tpx subfamily. Homodimer.

The enzyme catalyses a hydroperoxide + [thioredoxin]-dithiol = an alcohol + [thioredoxin]-disulfide + H2O. In terms of biological role, thiol-specific peroxidase that catalyzes the reduction of hydrogen peroxide and organic hydroperoxides to water and alcohols, respectively. Plays a role in cell protection against oxidative stress by detoxifying peroxides. The polypeptide is Thiol peroxidase (Streptococcus sanguinis).